The sequence spans 431 residues: Serine--tRNA ligase (431 aa).

237 to 239 is a binding site for L-serine; that stretch reads TAE. 268–270 contacts ATP; sequence RSE. Glutamate 291 serves as a coordination point for L-serine. 355–358 contributes to the ATP binding site; it reads EISS. L-serine is bound at residue serine 390.

The protein belongs to the class-II aminoacyl-tRNA synthetase family. Type-1 seryl-tRNA synthetase subfamily. Homodimer. The tRNA molecule binds across the dimer.

The protein resides in the cytoplasm. The enzyme catalyses tRNA(Ser) + L-serine + ATP = L-seryl-tRNA(Ser) + AMP + diphosphate + H(+). The catalysed reaction is tRNA(Sec) + L-serine + ATP = L-seryl-tRNA(Sec) + AMP + diphosphate + H(+). The protein operates within aminoacyl-tRNA biosynthesis; selenocysteinyl-tRNA(Sec) biosynthesis; L-seryl-tRNA(Sec) from L-serine and tRNA(Sec): step 1/1. In terms of biological role, catalyzes the attachment of serine to tRNA(Ser). Is also able to aminoacylate tRNA(Sec) with serine, to form the misacylated tRNA L-seryl-tRNA(Sec), which will be further converted into selenocysteinyl-tRNA(Sec). This chain is Serine--tRNA ligase, found in Neisseria gonorrhoeae (strain ATCC 700825 / FA 1090).